The primary structure comprises 295 residues: Probable protein phosphatase 2C 5 (295 aa).

Positions 23 to 294 (QYAATHMQGW…DNMTCILVLF (272 aa)) constitute a PPM-type phosphatase domain. Positions 57 and 58 each coordinate Mn(2+). Residues 151 to 170 (NRDGKPFDMSKDHKPDDDQE) form a disordered region. 2 residues coordinate Mn(2+): D237 and D285.

The protein belongs to the PP2C family. Requires Mg(2+) as cofactor. Mn(2+) is required as a cofactor.

Its subcellular location is the membrane. The catalysed reaction is O-phospho-L-seryl-[protein] + H2O = L-seryl-[protein] + phosphate. The enzyme catalyses O-phospho-L-threonyl-[protein] + H2O = L-threonyl-[protein] + phosphate. In terms of biological role, enzyme with a broad specificity. The protein is Probable protein phosphatase 2C 5 of Paramecium tetraurelia.